Consider the following 504-residue polypeptide: uncharacterized protein (504 aa).

Positions 1 to 212 are excised as a propeptide; the sequence is MFMKSKAAGS…LYKTQDPVLD (212 aa).

This is an uncharacterized protein from Deinococcus radiodurans (strain ATCC 13939 / DSM 20539 / JCM 16871 / CCUG 27074 / LMG 4051 / NBRC 15346 / NCIMB 9279 / VKM B-1422 / R1).